A 156-amino-acid polypeptide reads, in one-letter code: 6,7-dimethyl-8-ribityllumazine synthase (156 aa).

5-amino-6-(D-ribitylamino)uracil contacts are provided by residues F22, 56 to 58 (AFE), and 80 to 82 (VVI). 85-86 (ST) is a (2S)-2-hydroxy-3-oxobutyl phosphate binding site. H88 acts as the Proton donor in catalysis. Residue F113 coordinates 5-amino-6-(D-ribitylamino)uracil. (2S)-2-hydroxy-3-oxobutyl phosphate is bound at residue R127.

It belongs to the DMRL synthase family.

It carries out the reaction (2S)-2-hydroxy-3-oxobutyl phosphate + 5-amino-6-(D-ribitylamino)uracil = 6,7-dimethyl-8-(1-D-ribityl)lumazine + phosphate + 2 H2O + H(+). Its pathway is cofactor biosynthesis; riboflavin biosynthesis; riboflavin from 2-hydroxy-3-oxobutyl phosphate and 5-amino-6-(D-ribitylamino)uracil: step 1/2. Its function is as follows. Catalyzes the formation of 6,7-dimethyl-8-ribityllumazine by condensation of 5-amino-6-(D-ribitylamino)uracil with 3,4-dihydroxy-2-butanone 4-phosphate. This is the penultimate step in the biosynthesis of riboflavin. The chain is 6,7-dimethyl-8-ribityllumazine synthase from Streptococcus agalactiae serotype Ia (strain ATCC 27591 / A909 / CDC SS700).